We begin with the raw amino-acid sequence, 367 residues long: Indole glucosinolate O-methyltransferase 5 (367 aa).

Residues glycine 209, aspartate 232, aspartate 252, methionine 253, and lysine 266 each contribute to the S-adenosyl-L-homocysteine site. Histidine 270 functions as the Proton acceptor in the catalytic mechanism.

This sequence belongs to the class I-like SAM-binding methyltransferase superfamily. Cation-independent O-methyltransferase family.

It participates in secondary metabolite biosynthesis. Functionally, involved in indole glucosinolate biosynthesis. Catalyzes methoxylation reactions of the glucosinolate indole ring. Converts the hydroxy intermediates 4-hydroxy-indol-3-yl-methylglucosinolate (4OH-I3M) and 1-hydroxy-indol-3-yl-methylglucosinolate (1OH-I3M) to 4-methoxy-indol-3-yl-methylglucosinolate (4MO-I3M) and 1-methoxy-indol-3-yl-methylglucosinolate, respectively. The protein is Indole glucosinolate O-methyltransferase 5 of Arabidopsis thaliana (Mouse-ear cress).